The following is a 187-amino-acid chain: uncharacterized protein (187 aa).

Residues 53 to 187 (RKPHIYSPAD…CLQTSYVVPG (135 aa)) enclose the Tyr recombinase domain. Residues Arg98 and Lys123 contribute to the active site.

It belongs to the 'phage' integrase family.

This is an uncharacterized protein from Sinorhizobium fredii (strain NBRC 101917 / NGR234).